The chain runs to 45 residues: MPKRTFQPNNRRRARKHGFRARMRTRAGRAIIGARRSKGRASLSA.

This sequence belongs to the bacterial ribosomal protein bL34 family.

In Kocuria rhizophila (strain ATCC 9341 / DSM 348 / NBRC 103217 / DC2201), this protein is Large ribosomal subunit protein bL34.